We begin with the raw amino-acid sequence, 614 residues long: Signal recognition particle receptor subunit alpha homolog (614 aa).

A disordered region spans residues 119–244 (EASAKQVKAP…DRSRDSPDDV (126 aa)). Positions 149-160 (QDDKKPVEKRVN) are enriched in basic and acidic residues. Pro residues predominate over residues 164–178 (APPPSKSQPSSPPTG). Positions 232–241 (ALLDRSRDSP) are enriched in basic and acidic residues. 2 positions are modified to phosphoserine: serine 237 and serine 240. Position 246 is a phosphotyrosine (tyrosine 246). Residues serine 268, serine 278, and serine 279 each carry the phosphoserine modification. Residues 268–285 (SEDEADNEDASSEGEAEE) show a composition bias toward acidic residues. The interval 268-290 (SEDEADNEDASSEGEAEEQVQSK) is disordered. The tract at residues 396–613 (YTIIFCGVNG…NVNAVVNSLM (218 aa)) is NG domain. GTP contacts are provided by residues 402 to 409 (GVNGVGKS), 497 to 501 (DTAGR), and 565 to 568 (TKFD).

It belongs to the GTP-binding SRP family. Heterodimer of SrpRalpha and SrpRbeta. In terms of tissue distribution, in 8-9 hours embryos, expression is seen in a segmental pattern along embryonic ventral midline.

It is found in the endoplasmic reticulum membrane. In terms of biological role, component of the SRP (signal recognition particle) receptor. Ensures, in conjunction with the signal recognition particle, the correct targeting of the nascent secretory proteins to the endoplasmic reticulum membrane system. Forms a guanosine 5'-triphosphate (GTP)-dependent complex with the SRP subunit Srp54. SRP receptor compaction and GTPase rearrangement drive SRP-mediated cotranslational protein translocation into the ER. May have a role in axonogenesis. This chain is Signal recognition particle receptor subunit alpha homolog, found in Drosophila melanogaster (Fruit fly).